The following is a 380-amino-acid chain: uncharacterized protein (380 aa).

Disordered stretches follow at residues 278–323 (AATI…PRVA) and 345–368 (SLPG…RPRR). Basic residues predominate over residues 301 to 319 (RNGPRRPARRGTSRGRRCA).

This is an uncharacterized protein from Mycobacterium tuberculosis (strain CDC 1551 / Oshkosh).